We begin with the raw amino-acid sequence, 504 residues long: Pre-mRNA-processing factor 19 (504 aa).

Residue Ser-2 is modified to N-acetylserine. The U-box domain maps to 2 to 73 (SLICSISNEV…KPPSATSIPA (72 aa)). The segment at 68–223 (ATSIPAILKA…VGLHSASIPG (156 aa)) is may mediate interaction with PSMC5. Lys-122, Lys-179, Lys-244, and Lys-261 each carry N6-acetyllysine. One copy of the WD 1 repeat lies at 219–259 (ASIPGILALDLCPSDTNKILTGGADKNVVVFDKSSEQILAT). 6 WD repeats span residues 262–301 (GHTK…CVQV), 304–345 (AHES…TKVT), 348–387 (TSGC…NVAN), 390–429 (GHSG…NFKT), 433–472 (DNNF…LHFT), and 473–503 (EHSG…KFYS).

It belongs to the WD repeat PRP19 family. Homotetramer. Component of activated, catalytic and post-catalytic spliceosomes. Component of the Prp19 complex/PRP19C/Nineteen complex/NTC and related complexes described as PRP19-CDC5L splicing complex and PSO4 complex. A homotetramer of PRPF19, CDC5L, PLRG1 and BCAS2 constitute the core of those complexes. The interaction with CDC5L, PLRG1 and BCAS2 is direct within this core complex. At least three less stably associated proteins CTNNBL1, CWC15 and HSPA8 are found in the Prp19 complex. The Prp19 complex associates with the spliceosome during its assembly and remodeling recruiting additional proteins. Component of the XAB2 complex, a multimeric protein complex composed of XAB2, PRPF19, AQR, ZNF830, ISY1, and PPIE. Interacts with CWC22 and EIF4A3 in an RNA-independent manner. Interacts with RPA1 and RPA2; the PRP19-CDC5L complex is recruited to the sites of DNA repair where it interacts with the replication protein A complex (RPA). Interacts with SETMAR; required for SETMAR recruitment to site of DNA damage. Interacts with U2AF2; the interaction is direct and recruits the Prp19 complex to RNA polymerase II C-terminal domain (CTD) and the pre-mRNA. Interacts with PRPF3. Interacts with APEX1, DNTT and PSMB4. Interacts with PSMC5. Interacts with KNSTRN. Interacts (via N-terminus) with CDC5L. Interacts with KHDC4. Interacts with USB1. Interacts with DDX41. Ubiquitous. Weakly expressed in senescent cells of different tissue origins. Highly expressed in tumor cell lines.

The protein resides in the nucleus. Its subcellular location is the nucleoplasm. It localises to the cytoplasm. The protein localises to the cytoskeleton. It is found in the spindle. The protein resides in the lipid droplet. It catalyses the reaction S-ubiquitinyl-[E2 ubiquitin-conjugating enzyme]-L-cysteine + [acceptor protein]-L-lysine = [E2 ubiquitin-conjugating enzyme]-L-cysteine + N(6)-ubiquitinyl-[acceptor protein]-L-lysine.. Its pathway is protein modification; protein ubiquitination. In terms of biological role, ubiquitin-protein ligase which is a core component of several complexes mainly involved pre-mRNA splicing and DNA repair. Required for pre-mRNA splicing as component of the spliceosome. Core component of the PRP19C/Prp19 complex/NTC/Nineteen complex which is part of the spliceosome and participates in its assembly, its remodeling and is required for its activity. During assembly of the spliceosome, mediates 'Lys-63'-linked polyubiquitination of the U4 spliceosomal protein PRPF3. Ubiquitination of PRPF3 allows its recognition by the U5 component PRPF8 and stabilizes the U4/U5/U6 tri-snRNP spliceosomal complex. Recruited to RNA polymerase II C-terminal domain (CTD) and the pre-mRNA, it may also couple the transcriptional and spliceosomal machineries. The XAB2 complex, which contains PRPF19, is also involved in pre-mRNA splicing, transcription and transcription-coupled repair. Beside its role in pre-mRNA splicing PRPF19, as part of the PRP19-CDC5L complex, plays a role in the DNA damage response/DDR. It is recruited to the sites of DNA damage by the RPA complex where PRPF19 directly ubiquitinates RPA1 and RPA2. 'Lys-63'-linked polyubiquitination of the RPA complex allows the recruitment of the ATR-ATRIP complex and the activation of ATR, a master regulator of the DNA damage response. May also play a role in DNA double-strand break (DSB) repair by recruiting the repair factor SETMAR to altered DNA. As part of the PSO4 complex may also be involved in the DNA interstrand cross-links/ICLs repair process. In addition, may also mediate 'Lys-48'-linked polyubiquitination of substrates and play a role in proteasomal degradation. May play a role in the biogenesis of lipid droplets. May play a role in neural differentiation possibly through its function as part of the spliceosome. This is Pre-mRNA-processing factor 19 from Homo sapiens (Human).